Reading from the N-terminus, the 415-residue chain is Glucose-6-phosphate isomerase (415 aa).

Catalysis depends on Glu-267, which acts as the Proton donor. Catalysis depends on residues His-293 and Lys-406.

It belongs to the GPI family.

It is found in the cytoplasm. It catalyses the reaction alpha-D-glucose 6-phosphate = beta-D-fructose 6-phosphate. Its pathway is carbohydrate biosynthesis; gluconeogenesis. It participates in carbohydrate degradation; glycolysis; D-glyceraldehyde 3-phosphate and glycerone phosphate from D-glucose: step 2/4. Its function is as follows. Catalyzes the reversible isomerization of glucose-6-phosphate to fructose-6-phosphate. This chain is Glucose-6-phosphate isomerase, found in Thermus thermophilus (strain ATCC 27634 / DSM 579 / HB8).